The following is a 590-amino-acid chain: L-fucose isomerase (590 aa).

Catalysis depends on proton acceptor residues Glu337 and Asp361. Mn(2+) contacts are provided by Glu337, Asp361, and His528.

This sequence belongs to the L-fucose isomerase family. It depends on Mn(2+) as a cofactor.

The protein resides in the cytoplasm. The enzyme catalyses L-fucose = L-fuculose. Its pathway is carbohydrate degradation; L-fucose degradation; L-lactaldehyde and glycerone phosphate from L-fucose: step 1/3. Functionally, converts the aldose L-fucose into the corresponding ketose L-fuculose. This is L-fucose isomerase from Bacteroides fragilis (strain YCH46).